Reading from the N-terminus, the 196-residue chain is Penicillin-binding protein activator LpoB (196 aa).

An N-terminal signal peptide occupies residues 1 to 16; the sequence is MKKYLGIVLMALVIAG. The N-palmitoyl cysteine moiety is linked to residue Cys17. The S-diacylglycerol cysteine moiety is linked to residue Cys17. Residues 24-54 form a disordered region; the sequence is TEQPATIEPAVPTPSKPQLPPSESQPLPTPP. Residues 34–43 are compositionally biased toward pro residues; sequence VPTPSKPQLP.

The protein belongs to the LpoB family. Interacts with PBP1b.

The protein localises to the cell outer membrane. Its function is as follows. Regulator of peptidoglycan synthesis that is essential for the function of penicillin-binding protein 1B (PBP1b). The protein is Penicillin-binding protein activator LpoB of Dickeya dadantii (strain 3937) (Erwinia chrysanthemi (strain 3937)).